The sequence spans 166 residues: Probable calcium-binding protein CML17 (166 aa).

4 EF-hand domains span residues glutamate 12 to lysine 47, proline 48 to serine 83, tyrosine 91 to alanine 126, and leucine 127 to aspartate 162. Ca(2+) contacts are provided by aspartate 25, asparagine 27, aspartate 29, serine 31, and glutamate 36. Ca(2+) is bound by residues aspartate 104, aspartate 106, asparagine 108, glutamate 115, aspartate 140, aspartate 142, aspartate 144, arginine 146, and glutamate 151.

In terms of biological role, potential calcium sensor. In Arabidopsis thaliana (Mouse-ear cress), this protein is Probable calcium-binding protein CML17 (CML17).